The sequence spans 323 residues: tRNA dimethylallyltransferase (323 aa).

21-28 serves as a coordination point for ATP; sequence GPTACNKS. A substrate-binding site is contributed by 23-28; that stretch reads TACNKS. 3 interaction with substrate tRNA regions span residues 46–49, 171–175, and 252–257; these read DSAL, QRVLR, and RCVGYR.

It belongs to the IPP transferase family. In terms of assembly, monomer. Mg(2+) is required as a cofactor.

It catalyses the reaction adenosine(37) in tRNA + dimethylallyl diphosphate = N(6)-dimethylallyladenosine(37) in tRNA + diphosphate. Catalyzes the transfer of a dimethylallyl group onto the adenine at position 37 in tRNAs that read codons beginning with uridine, leading to the formation of N6-(dimethylallyl)adenosine (i(6)A). The polypeptide is tRNA dimethylallyltransferase (Buchnera aphidicola subsp. Baizongia pistaciae (strain Bp)).